A 369-amino-acid chain; its full sequence is Coproporphyrin III ferrochelatase (369 aa).

Residues serine 61 and tyrosine 130 each contribute to the Fe-coproporphyrin III site. Positions 197 and 286 each coordinate Fe(2+).

Belongs to the ferrochelatase family.

The protein localises to the cytoplasm. The enzyme catalyses Fe-coproporphyrin III + 2 H(+) = coproporphyrin III + Fe(2+). It participates in porphyrin-containing compound metabolism; protoheme biosynthesis. Functionally, involved in coproporphyrin-dependent heme b biosynthesis. Catalyzes the insertion of ferrous iron into coproporphyrin III to form Fe-coproporphyrin III. The sequence is that of Coproporphyrin III ferrochelatase from Corynebacterium diphtheriae (strain ATCC 700971 / NCTC 13129 / Biotype gravis).